We begin with the raw amino-acid sequence, 319 residues long: HTH-type transcriptional regulator YidZ (319 aa).

One can recognise an HTH lysR-type domain in the interval 8-65 (LDLNLLLCLQLLMQERSVTKAAKRMNVTPSAVSKSLAKLRAWFDDPLFVNSPLGLSPT). A DNA-binding region (H-T-H motif) is located at residues 25–44 (VTKAAKRMNVTPSAVSKSLA).

The protein belongs to the LysR transcriptional regulatory family.

Functionally, involved in anaerobic NO protection. In Escherichia coli O157:H7 (strain EC4115 / EHEC), this protein is HTH-type transcriptional regulator YidZ.